The chain runs to 172 residues: MKVLGIDPGTATTGYGLIRSEAGRVKAITYGTIVTPAQLEMPLRLYQIYRELQALLMEYKPDAVAVEEIFYNRNSKTVITVAQSRGVILMTAAAAGIPVAEYTPLQVKQAVVGYGAAEKKQVQLMVQKILGLQQLPRPDDAADALAVAICHLHSYRLSSFLESSATKAGEKR.

Active-site residues include Asp7, Glu67, and Asp140. Residues Asp7, Glu67, and Asp140 each coordinate Mg(2+).

Belongs to the RuvC family. In terms of assembly, homodimer which binds Holliday junction (HJ) DNA. The HJ becomes 2-fold symmetrical on binding to RuvC with unstacked arms; it has a different conformation from HJ DNA in complex with RuvA. In the full resolvosome a probable DNA-RuvA(4)-RuvB(12)-RuvC(2) complex forms which resolves the HJ. It depends on Mg(2+) as a cofactor.

Its subcellular location is the cytoplasm. The enzyme catalyses Endonucleolytic cleavage at a junction such as a reciprocal single-stranded crossover between two homologous DNA duplexes (Holliday junction).. Functionally, the RuvA-RuvB-RuvC complex processes Holliday junction (HJ) DNA during genetic recombination and DNA repair. Endonuclease that resolves HJ intermediates. Cleaves cruciform DNA by making single-stranded nicks across the HJ at symmetrical positions within the homologous arms, yielding a 5'-phosphate and a 3'-hydroxyl group; requires a central core of homology in the junction. The consensus cleavage sequence is 5'-(A/T)TT(C/G)-3'. Cleavage occurs on the 3'-side of the TT dinucleotide at the point of strand exchange. HJ branch migration catalyzed by RuvA-RuvB allows RuvC to scan DNA until it finds its consensus sequence, where it cleaves and resolves the cruciform DNA. In Syntrophomonas wolfei subsp. wolfei (strain DSM 2245B / Goettingen), this protein is Crossover junction endodeoxyribonuclease RuvC.